Here is a 414-residue protein sequence, read N- to C-terminus: Serine hydroxymethyltransferase (414 aa).

Residues L118 and 122–124 contribute to the (6S)-5,6,7,8-tetrahydrofolate site; that span reads GHL. K227 carries the N6-(pyridoxal phosphate)lysine modification. (6S)-5,6,7,8-tetrahydrofolate is bound by residues E240 and 350–352; that span reads SPF.

It belongs to the SHMT family. Homodimer. The cofactor is pyridoxal 5'-phosphate.

It localises to the cytoplasm. The catalysed reaction is (6R)-5,10-methylene-5,6,7,8-tetrahydrofolate + glycine + H2O = (6S)-5,6,7,8-tetrahydrofolate + L-serine. It functions in the pathway one-carbon metabolism; tetrahydrofolate interconversion. Its pathway is amino-acid biosynthesis; glycine biosynthesis; glycine from L-serine: step 1/1. Catalyzes the reversible interconversion of serine and glycine with tetrahydrofolate (THF) serving as the one-carbon carrier. This reaction serves as the major source of one-carbon groups required for the biosynthesis of purines, thymidylate, methionine, and other important biomolecules. Also exhibits THF-independent aldolase activity toward beta-hydroxyamino acids, producing glycine and aldehydes, via a retro-aldol mechanism. This is Serine hydroxymethyltransferase from Bacillus thuringiensis (strain Al Hakam).